A 449-amino-acid chain; its full sequence is Malonyl-CoA:anthocyanidin 5-O-glucoside-6''-O-malonyltransferase (449 aa).

At M1 the chain carries N-acetylmethionine. Catalysis depends on proton acceptor residues H162 and D394.

The protein belongs to the plant acyltransferase family. In terms of tissue distribution, expressed in flowers. Detected in leaves, stems, roots and siliques.

The catalysed reaction is anthocyanin A3 + malonyl-CoA = anthocyanin A5 + CoA. It carries out the reaction anthocyanin A7 + malonyl-CoA = anthocyanin A9 + CoA. It catalyses the reaction anthocyanin A6 + malonyl-CoA = anthocyanin A8 + CoA. The enzyme catalyses anthocyanin A10 + malonyl-CoA = anthocyanin A11 + CoA. In terms of biological role, catalyzes the malonylation of the 5-O-glucose residue of anthocyanins, using malonyl-CoA as the malonyl donor. Acts only on anthocyanin substrates containing a 5-O-glucosyl moiety. Acts on the four native A.thaliana anthocyanins, A3, A7, and to a lesser extent, A6 and A10. Can also use the non-native anthocyanin compounds cyanin (cyanidin 3,5-diglucoside), malvin, pelargonidin 3,5-diglucoside, peonidin 3,5-diglucoside, cyanidin 3-coumaroylglucoside 5-glucoside, delphinidin 3-coumaroylrutinoside 5-glucoside and petunidin 3-coumaroylrutinoside 5-glucoside as substrates. Is the sole enzyme responsible for producing malonylated anthocyanin 5-O-glucosides in A.thaliana. Is not able to catalyze acyl transfer using acetyl-CoA, butyryl-CoA, hexanoyl-CoA, benzoyl-CoA, cinnamoyl-CoA, methylmalonyl-CoA, succinyl-CoA, p-coumaroyl-CoA or caffeoyl-CoA. This Arabidopsis thaliana (Mouse-ear cress) protein is Malonyl-CoA:anthocyanidin 5-O-glucoside-6''-O-malonyltransferase (5MAT).